The sequence spans 879 residues: Alanine--tRNA ligase (879 aa).

The Zn(2+) site is built by histidine 566, histidine 570, cysteine 668, and histidine 672.

It belongs to the class-II aminoacyl-tRNA synthetase family. It depends on Zn(2+) as a cofactor.

The protein localises to the cytoplasm. The catalysed reaction is tRNA(Ala) + L-alanine + ATP = L-alanyl-tRNA(Ala) + AMP + diphosphate. In terms of biological role, catalyzes the attachment of alanine to tRNA(Ala) in a two-step reaction: alanine is first activated by ATP to form Ala-AMP and then transferred to the acceptor end of tRNA(Ala). Also edits incorrectly charged Ser-tRNA(Ala) and Gly-tRNA(Ala) via its editing domain. This Clostridium novyi (strain NT) protein is Alanine--tRNA ligase.